Reading from the N-terminus, the 275-residue chain is Bis(5'-nucleosyl)-tetraphosphatase, symmetrical (275 aa).

This sequence belongs to the Ap4A hydrolase family.

The catalysed reaction is P(1),P(4)-bis(5'-adenosyl) tetraphosphate + H2O = 2 ADP + 2 H(+). Its function is as follows. Hydrolyzes diadenosine 5',5'''-P1,P4-tetraphosphate to yield ADP. This is Bis(5'-nucleosyl)-tetraphosphatase, symmetrical from Nitrosospira multiformis (strain ATCC 25196 / NCIMB 11849 / C 71).